We begin with the raw amino-acid sequence, 122 residues long: MAEPGGRGDYRKDGRLPSLSRSPLSTTLGTSPACGLEIPPTSGARPDGSCSLPAPVYHLKSRQWKGMGRGYRQRWRLQGRGDCDMGCVVQASGLFPAEMRERTTKKMATSPLDLCAGACWEM.

Residues 1-15 (MAEPGGRGDYRKDGR) show a composition bias toward basic and acidic residues. Residues 1–49 (MAEPGGRGDYRKDGRLPSLSRSPLSTTLGTSPACGLEIPPTSGARPDGS) form a disordered region. The span at 16–32 (LPSLSRSPLSTTLGTSP) shows a compositional bias: low complexity.

This is an uncharacterized protein from Homo sapiens (Human).